We begin with the raw amino-acid sequence, 240 residues long: UDP-2,3-diacylglucosamine hydrolase (240 aa).

Asp-8, His-10, Asp-41, Asn-79, and His-114 together coordinate Mn(2+). 79 to 80 (NR) contacts substrate. Substrate is bound by residues Asp-122, Ser-160, Asn-164, Lys-167, and His-195. Residues His-195 and His-197 each coordinate Mn(2+).

Belongs to the LpxH family. Mn(2+) is required as a cofactor.

It localises to the cell inner membrane. It catalyses the reaction UDP-2-N,3-O-bis[(3R)-3-hydroxytetradecanoyl]-alpha-D-glucosamine + H2O = 2-N,3-O-bis[(3R)-3-hydroxytetradecanoyl]-alpha-D-glucosaminyl 1-phosphate + UMP + 2 H(+). It participates in glycolipid biosynthesis; lipid IV(A) biosynthesis; lipid IV(A) from (3R)-3-hydroxytetradecanoyl-[acyl-carrier-protein] and UDP-N-acetyl-alpha-D-glucosamine: step 4/6. Hydrolyzes the pyrophosphate bond of UDP-2,3-diacylglucosamine to yield 2,3-diacylglucosamine 1-phosphate (lipid X) and UMP by catalyzing the attack of water at the alpha-P atom. Involved in the biosynthesis of lipid A, a phosphorylated glycolipid that anchors the lipopolysaccharide to the outer membrane of the cell. The protein is UDP-2,3-diacylglucosamine hydrolase of Escherichia coli O17:K52:H18 (strain UMN026 / ExPEC).